The primary structure comprises 249 residues: Protein-lysine 6-oxidase (249 aa).

Position 19 is a sulfotyrosine (Tyr-19). Residues 45 to 249 (PDLVPDPYYI…YASGCTISPY (205 aa)) are lysyl-oxidase like. 5 cysteine pairs are disulfide-bonded: Cys-70–Cys-76, Cys-123–Cys-172, Cys-156–Cys-162, Cys-183–Cys-193, and Cys-230–Cys-244. 3 residues coordinate Cu cation: His-124, His-126, and His-128. A cross-link (lysine tyrosylquinone (Lys-Tyr)) is located at residues 152-187 (KASFCLEDTSCDYGYHRRFACTAHTQGLSPGCYDTY). 2',4',5'-topaquinone is present on Tyr-187.

Belongs to the lysyl oxidase family. Interacts with MFAP4. Interacts (via propeptide) with EFEMP2; this interaction is strong and facilitates formation of ternary complexes with ELN during elastic fiber assembly; this interaction limits interaction of EFEMP2 with FBLN5. The cofactor is Cu cation. Lysine tyrosylquinone residue is required as a cofactor. In terms of processing, the lysine tyrosylquinone cross-link (LTQ) is generated by condensation of the epsilon-amino group of a lysine with a topaquinone produced by oxidation of tyrosine. Post-translationally, proteolytically cleaved by BMP1 which removes the propeptide. Also proteolytically cleaved by ADAMTS2 and ADAMTS14, but not by ADAMTS3, at an additional cleavage site downstream of the BMP1 cleavage site. The propeptide plays a role in directing the deposition of this enzyme to elastic fibers, via interaction with tropoelastin. Cleavage by BMP1 to remove the propeptide does not increase enzymatic activity but increases binding to collagen. Cleavage by ADAMTS2 produces a form with reduced collagen-binding activity. Sulfated at Tyr-19 and also at either Tyr-15 or Tyr-16 which enhances binding to collagen.

The protein resides in the secreted. It localises to the extracellular space. It carries out the reaction L-lysyl-[protein] + O2 + H2O = (S)-2-amino-6-oxohexanoyl-[protein] + H2O2 + NH4(+). Functionally, responsible for the post-translational oxidative deamination of peptidyl lysine residues in precursors to fibrous collagen and elastin. Regulator of Ras expression. May play a role in tumor suppression. Plays a role in the aortic wall architecture. In Sus scrofa (Pig), this protein is Protein-lysine 6-oxidase.